The primary structure comprises 218 residues: Ras-related protein RABA1h (218 aa).

Residue 20–27 coordinates GTP; the sequence is GDSGVGKS. Positions 42–50 match the Effector region motif; sequence SRSTIGVEF. Residues 68 to 72, 126 to 129, and 156 to 157 contribute to the GTP site; these read DTAGQ, NKAD, and SA. Residues Cys-215 and Cys-216 are each lipidated (S-geranylgeranyl cysteine).

This sequence belongs to the small GTPase superfamily. Rab family.

The protein resides in the cell membrane. Intracellular vesicle trafficking and protein transport. This is Ras-related protein RABA1h (RABA1H) from Arabidopsis thaliana (Mouse-ear cress).